A 653-amino-acid polypeptide reads, in one-letter code: Exocyst complex component 7 (653 aa).

The SEC8 and ARHQ binding stretch occupies residues 1 to 384; that stretch reads MIPPQEASAR…TKNKLPGLIT (384 aa). Coiled-coil stretches lie at residues 5-42 and 63-85; these read QEAS…TKNM and VHKQ…SCLD. Residue serine 133 is modified to Phosphoserine. The disordered stretch occupies residues 238 to 272; the sequence is FRKSSSSSGVPYSPAIPNKRKDTPTKKPIKRPGRD.

Belongs to the EXO70 family. The exocyst complex is composed of EXOC1, EXOC2, EXOC3, EXOC4, EXOC5, EXOC6, EXOC7 and EXOC8. Interacts with ARHQ in a GTP-dependent manner. Interacts with RAB11FIP3.

It is found in the cytoplasm. It localises to the cytosol. The protein localises to the cell membrane. The protein resides in the midbody. Its subcellular location is the midbody ring. In terms of biological role, component of the exocyst complex involved in the docking of exocytic vesicles with fusion sites on the plasma membrane. In adipocytes, plays a crucial role in targeting SLC2A4 vesicle to the plasma membrane in response to insulin, perhaps directing the vesicle to the precise site of fusion. It is required for neuron survival and plays an essential role in cortical development. The chain is Exocyst complex component 7 (Exoc7) from Rattus norvegicus (Rat).